We begin with the raw amino-acid sequence, 228 residues long: Aldehyde dehydrogenase 9 (228 aa).

76-81 (GSTETA) lines the NAD(+) pocket. Catalysis depends on residues Glu-99 and Cys-132.

It belongs to the aldehyde dehydrogenase family.

The enzyme catalyses an aldehyde + NAD(+) + H2O = a carboxylate + NADH + 2 H(+). It participates in alcohol metabolism; ethanol degradation; acetate from ethanol: step 2/2. The polypeptide is Aldehyde dehydrogenase 9 (ALDH9) (Polyandrocarpa misakiensis (Tunicate)).